The primary structure comprises 678 residues: Gamma-tubulin complex component 2 (678 aa).

Triggers nucleus envelope localization regions lie at residues 63 to 116, 118 to 180, 290 to 318, 472 to 548, and 587 to 622; these read QELI…RIFP, CEYY…FYCQ, IPGFLANIAATILTTGKYLNVMRECGHNV, LSIV…EVLE, and PDVLKKMEKLKSVCLQYAAATQWLISSSIDINSQSH.

This sequence belongs to the TUBGCP family. As to quaternary structure, part of the gamma-tubulin complex. Gamma-tubulin complex is composed of gamma-tubulin and GCP proteins (e.g. GCP2 and GCP3). Interacts directly with GCP3.

It is found in the cytoplasm. The protein localises to the cytoskeleton. It localises to the microtubule organizing center. The protein resides in the nucleus envelope. Its subcellular location is the cell cortex. Gamma-tubulin complex is necessary for microtubule nucleation at the microtubule organizing centers (MTOCs). Required for the positioning of the gamma-tubulin-containing complex on pre-existing microtubules and for the proper organization of cortical arrays. The protein is Gamma-tubulin complex component 2 (GCP2) of Arabidopsis thaliana (Mouse-ear cress).